Consider the following 538-residue polypeptide: Inositol-3-phosphate synthase (538 aa).

Gly-74, Gly-75, Asn-76, Asn-77, Asp-150, Ser-186, Val-187, Gln-197, Asp-198, Arg-200, Thr-247, Ala-248, Asn-249, Thr-250, Gly-298, Ser-299, Asp-323, Ser-326, Asn-357, Asn-358, Asp-359, Lys-372, Gly-412, Asp-413, Asp-441, and Ser-442 together coordinate NAD(+).

It belongs to the myo-inositol 1-phosphate synthase family. Homotetramer. NAD(+) serves as cofactor.

The protein resides in the cytoplasm. It carries out the reaction D-glucose 6-phosphate = 1D-myo-inositol 3-phosphate. Its pathway is polyol metabolism; myo-inositol biosynthesis; myo-inositol from D-glucose 6-phosphate: step 1/2. Functionally, key enzyme in myo-inositol biosynthesis pathway that catalyzes the conversion of glucose 6-phosphate to 1-myo-inositol 1-phosphate in a NAD-dependent manner. Rate-limiting enzyme in the synthesis of all inositol-containing compounds. The chain is Inositol-3-phosphate synthase (INO1) from Candida glabrata (strain ATCC 2001 / BCRC 20586 / JCM 3761 / NBRC 0622 / NRRL Y-65 / CBS 138) (Yeast).